The chain runs to 475 residues: Ribulose bisphosphate carboxylase large chain (475 aa).

The propeptide occupies methionine 1–serine 2. An N-acetylproline modification is found at proline 3. An N6,N6,N6-trimethyllysine modification is found at lysine 14. The substrate site is built by asparagine 123 and threonine 173. Lysine 175 serves as the catalytic Proton acceptor. Residue lysine 177 coordinates substrate. Residues lysine 201, aspartate 203, and glutamate 204 each coordinate Mg(2+). Lysine 201 carries the N6-carboxylysine modification. The active-site Proton acceptor is histidine 294. Residues arginine 295, histidine 327, and serine 379 each contribute to the substrate site.

The protein belongs to the RuBisCO large chain family. Type I subfamily. Heterohexadecamer of 8 large chains and 8 small chains; disulfide-linked. The disulfide link is formed within the large subunit homodimers. Mg(2+) serves as cofactor. Post-translationally, the disulfide bond which can form in the large chain dimeric partners within the hexadecamer appears to be associated with oxidative stress and protein turnover.

Its subcellular location is the plastid. It localises to the chloroplast. The enzyme catalyses 2 (2R)-3-phosphoglycerate + 2 H(+) = D-ribulose 1,5-bisphosphate + CO2 + H2O. It carries out the reaction D-ribulose 1,5-bisphosphate + O2 = 2-phosphoglycolate + (2R)-3-phosphoglycerate + 2 H(+). Its function is as follows. RuBisCO catalyzes two reactions: the carboxylation of D-ribulose 1,5-bisphosphate, the primary event in carbon dioxide fixation, as well as the oxidative fragmentation of the pentose substrate in the photorespiration process. Both reactions occur simultaneously and in competition at the same active site. In Vitis vinifera (Grape), this protein is Ribulose bisphosphate carboxylase large chain.